The sequence spans 67 residues: Small ribosomal subunit protein bS21 (67 aa).

This sequence belongs to the bacterial ribosomal protein bS21 family.

This chain is Small ribosomal subunit protein bS21, found in Rhodospirillum centenum (strain ATCC 51521 / SW).